The sequence spans 355 residues: tRNA (guanine-N(1)-)-methyltransferase (355 aa).

S-adenosyl-L-methionine is bound by residues Gly-109 and 129 to 134 (IGDYVL).

Belongs to the RNA methyltransferase TrmD family. Homodimer.

It is found in the cytoplasm. It carries out the reaction guanosine(37) in tRNA + S-adenosyl-L-methionine = N(1)-methylguanosine(37) in tRNA + S-adenosyl-L-homocysteine + H(+). Specifically methylates guanosine-37 in various tRNAs. The polypeptide is tRNA (guanine-N(1)-)-methyltransferase (Chlamydia caviae (strain ATCC VR-813 / DSM 19441 / 03DC25 / GPIC) (Chlamydophila caviae)).